The sequence spans 839 residues: MSFFSRNINSKDRHKIQIISNSTAPSFEPNNEFVTSSCCCCGTILQHPKNISKFRCSVCYVTVVLQGTAFTQDKTELFDLDDMRELLSSCNNTYRELDKDEKRLRKHEVFHLLEDYIATRMVTIFPLNASFESSNPREMLDYDQVKEFYRILMELPTKKPFYSFLVACNELLKRPHVALNTPTPTNPKYKRIGLFRWILIILEVPIFKQTLANAEARCNTPHFRAISYEVLKKAVGYMSCLDEASAKELVHFLKYMQKDIFASKVELVNMYITFHFARILHTIGKETNNGKYSPQLEDFEHSEKLNPSLNQGSAKKLVHTNMNIFFGGIVRPMTSSANSKDILALNYRFSPEDYGNEWHIKTGARLLLCLYVANQSAYKCPVSNFYNTMIDFVDYKRDFELWQDLSKLSASHEKENSGSSGPRYSPVQFTICQCPFLFSLGMKISILEYETRRLMEYSAEQAFLKALDRKQVVDVYLKIRVRREFVTTDSLRSIQNQQKDLKKSLRIEFVNEPGIDAGGLRKEWFLLLTRDLFNPNNGLFVYVPESRLCWFSIMESIEHELLQGEGSSSELYYLFGVVLGLAIYNSTILDLKFPRAFYKKICGEVLSVNDFLELYPETGTNMLKMLEYDGEDFEDIFALTFETCFPDRFDESKIHYRQLCPDGSTQAVTRENKHEYFRLWMDFYLNRSIAPGFESFRNGFFHVIEGNSFRLFGSEELEQLVCGSNEQSLDVSMLRSVTRYQGGFDDNSPVVQWFWEILSEMEYPQQRKLLHFVTGSDRVPATGVTTIPFRISRIRSGADRLPLSHTCFNEICLHEYKDKETLRNKLIIALEESQGYGFR.

Residues 497–839 (QQKDLKKSLR…LEESQGYGFR (343 aa)) form the HECT domain. The Glycyl thioester intermediate role is filled by Cys807.

Belongs to the HUL4 family. As to quaternary structure, component of the TRAMP complex.

The protein resides in the nucleus. It catalyses the reaction S-ubiquitinyl-[E2 ubiquitin-conjugating enzyme]-L-cysteine + [acceptor protein]-L-lysine = [E2 ubiquitin-conjugating enzyme]-L-cysteine + N(6)-ubiquitinyl-[acceptor protein]-L-lysine.. Probable E3 ubiquitin-protein ligase, component of the TRAMP complex which has a poly(A) RNA polymerase activity and is involved in a post-transcriptional quality control mechanism limiting inappropriate expression of genetic information. Polyadenylation is required for the degradative activity of the exosome on several of its nuclear RNA substrates. This is Probable E3 ubiquitin-protein ligase HUL4 (HUL4) from Eremothecium gossypii (strain ATCC 10895 / CBS 109.51 / FGSC 9923 / NRRL Y-1056) (Yeast).